The primary structure comprises 258 residues: UPF0246 protein Bpro_3713 (258 aa).

It belongs to the UPF0246 family.

The chain is UPF0246 protein Bpro_3713 from Polaromonas sp. (strain JS666 / ATCC BAA-500).